A 66-amino-acid chain; its full sequence is Regulator of G-protein signaling 11 (66 aa).

Residues Glu-1–Leu-66 enclose the RGS domain.

Heterodimer with Gbeta5. Interacts with RGS7BP, leading to regulate the subcellular location of the heterodimer formed with Gbeta5.

In terms of biological role, inhibits signal transduction by increasing the GTPase activity of G protein alpha subunits thereby driving them into their inactive GDP-bound form. This Rattus norvegicus (Rat) protein is Regulator of G-protein signaling 11 (Rgs11).